The sequence spans 231 residues: LexA repressor (231 aa).

A DNA-binding region (H-T-H motif) is located at residues 26–46 (FDEMKDALDLRSKSGIHRLIT). Residues Ser-152 and Lys-190 each act as for autocatalytic cleavage activity in the active site.

This sequence belongs to the peptidase S24 family. As to quaternary structure, homodimer.

It carries out the reaction Hydrolysis of Ala-|-Gly bond in repressor LexA.. Represses a number of genes involved in the response to DNA damage (SOS response), including recA and lexA. In the presence of single-stranded DNA, RecA interacts with LexA causing an autocatalytic cleavage which disrupts the DNA-binding part of LexA, leading to derepression of the SOS regulon and eventually DNA repair. The sequence is that of LexA repressor from Dinoroseobacter shibae (strain DSM 16493 / NCIMB 14021 / DFL 12).